The following is a 292-amino-acid chain: HTH-type transcriptional regulator BlaA (292 aa).

Residues 5 to 62 (LPLNALRAFEASARHLNFTKAALELYVTQGAVSQQVRMLEERLGVILFKRLPRGLEMT) enclose the HTH lysR-type domain. Residues 22–41 (FTKAALELYVTQGAVSQQVR) constitute a DNA-binding region (H-T-H motif).

The protein belongs to the LysR transcriptional regulatory family.

In terms of biological role, positive regulator of the expression of the gene (blaB) for beta-lactamase. This chain is HTH-type transcriptional regulator BlaA (blaA), found in Proteus vulgaris.